Reading from the N-terminus, the 501-residue chain is Glutamyl-tRNA(Gln) amidotransferase subunit A (501 aa).

Active-site charge relay system residues include lysine 80 and serine 155. The active-site Acyl-ester intermediate is serine 179.

The protein belongs to the amidase family. GatA subfamily. In terms of assembly, heterotrimer of A, B and C subunits.

It catalyses the reaction L-glutamyl-tRNA(Gln) + L-glutamine + ATP + H2O = L-glutaminyl-tRNA(Gln) + L-glutamate + ADP + phosphate + H(+). Functionally, allows the formation of correctly charged Gln-tRNA(Gln) through the transamidation of misacylated Glu-tRNA(Gln) in organisms which lack glutaminyl-tRNA synthetase. The reaction takes place in the presence of glutamine and ATP through an activated gamma-phospho-Glu-tRNA(Gln). In Cupriavidus necator (strain ATCC 17699 / DSM 428 / KCTC 22496 / NCIMB 10442 / H16 / Stanier 337) (Ralstonia eutropha), this protein is Glutamyl-tRNA(Gln) amidotransferase subunit A.